The sequence spans 122 residues: Alpha-amylase/trypsin inhibitor (122 aa).

5 disulfide bridges follow: Cys-6-Cys-55, Cys-20-Cys-44, Cys-29-Cys-85, Cys-45-Cys-103, and Cys-57-Cys-114.

It belongs to the protease inhibitor I6 (cereal trypsin/alpha-amylase inhibitor) family. Seeds.

It is found in the secreted. Its function is as follows. May play a protective role against endo- and exogenous hydrolytic activities in the Ragi seeds. The polypeptide is Alpha-amylase/trypsin inhibitor (Eleusine coracana (Indian finger millet)).